The following is a 455-amino-acid chain: Enolase (455 aa).

Gln-166 is a (2R)-2-phosphoglycerate binding site. The active-site Proton donor is Glu-208. Residues Asp-249, Glu-311, and Asp-338 each contribute to the Mg(2+) site. Lys-363, Arg-392, Ser-393, and Lys-414 together coordinate (2R)-2-phosphoglycerate. Lys-363 (proton acceptor) is an active-site residue.

It belongs to the enolase family. Mg(2+) serves as cofactor.

It is found in the cytoplasm. The protein resides in the secreted. It localises to the cell surface. The enzyme catalyses (2R)-2-phosphoglycerate = phosphoenolpyruvate + H2O. The protein operates within carbohydrate degradation; glycolysis; pyruvate from D-glyceraldehyde 3-phosphate: step 4/5. In terms of biological role, catalyzes the reversible conversion of 2-phosphoglycerate (2-PG) into phosphoenolpyruvate (PEP). It is essential for the degradation of carbohydrates via glycolysis. The protein is Enolase of Mycoplasma mobile (strain ATCC 43663 / 163K / NCTC 11711) (Mesomycoplasma mobile).